Reading from the N-terminus, the 376-residue chain is Erythronate-4-phosphate dehydrogenase (376 aa).

Substrate is bound by residues Ser-45 and Thr-67. Asp-147 is a binding site for NAD(+). Arg-209 is an active-site residue. Position 233 (Asp-233) interacts with NAD(+). The active site involves Glu-238. His-255 (proton donor) is an active-site residue. NAD(+) is bound at residue Gly-258. Residue Tyr-259 coordinates substrate.

This sequence belongs to the D-isomer specific 2-hydroxyacid dehydrogenase family. PdxB subfamily. In terms of assembly, homodimer.

It localises to the cytoplasm. The enzyme catalyses 4-phospho-D-erythronate + NAD(+) = (R)-3-hydroxy-2-oxo-4-phosphooxybutanoate + NADH + H(+). It functions in the pathway cofactor biosynthesis; pyridoxine 5'-phosphate biosynthesis; pyridoxine 5'-phosphate from D-erythrose 4-phosphate: step 2/5. Its function is as follows. Catalyzes the oxidation of erythronate-4-phosphate to 3-hydroxy-2-oxo-4-phosphonooxybutanoate. The sequence is that of Erythronate-4-phosphate dehydrogenase from Shewanella baltica (strain OS223).